The primary structure comprises 323 residues: Aspartate carbamoyltransferase catalytic subunit (323 aa).

Residues arginine 71 and threonine 72 each coordinate carbamoyl phosphate. Lysine 99 is a binding site for L-aspartate. Arginine 121, histidine 151, and glutamine 154 together coordinate carbamoyl phosphate. 2 residues coordinate L-aspartate: arginine 184 and arginine 239. Residues glycine 280 and proline 281 each coordinate carbamoyl phosphate.

It belongs to the aspartate/ornithine carbamoyltransferase superfamily. ATCase family. As to quaternary structure, heterododecamer (2C3:3R2) of six catalytic PyrB chains organized as two trimers (C3), and six regulatory PyrI chains organized as three dimers (R2).

The enzyme catalyses carbamoyl phosphate + L-aspartate = N-carbamoyl-L-aspartate + phosphate + H(+). Its pathway is pyrimidine metabolism; UMP biosynthesis via de novo pathway; (S)-dihydroorotate from bicarbonate: step 2/3. Its function is as follows. Catalyzes the condensation of carbamoyl phosphate and aspartate to form carbamoyl aspartate and inorganic phosphate, the committed step in the de novo pyrimidine nucleotide biosynthesis pathway. The protein is Aspartate carbamoyltransferase catalytic subunit of Ralstonia nicotianae (strain ATCC BAA-1114 / GMI1000) (Ralstonia solanacearum).